A 908-amino-acid polypeptide reads, in one-letter code: Translation initiation factor IF-2 (908 aa).

Disordered regions lie at residues 122–180 (PVVE…VDDA) and 203–267 (EKAR…AVKK). The segment covering 132–143 (VAAEPEVVEAPE) has biased composition (acidic residues). Residues 157–166 (EEPAAPAAPV) are compositionally biased toward low complexity. Residues 223 to 248 (AKEDARPTKHVEDLAKLKKPHDKKDE) show a composition bias toward basic and acidic residues. The span at 256–267 (KHNKKAGKAVKK) shows a compositional bias: basic residues. The tr-type G domain maps to 409-578 (PRAPIVTVMG…ALQAELLELS (170 aa)). The tract at residues 418-425 (GHVDHGKT) is G1. 418–425 (GHVDHGKT) provides a ligand contact to GTP. The segment at 443 to 447 (GITQH) is G2. The G3 stretch occupies residues 464–467 (DTPG). GTP contacts are provided by residues 464–468 (DTPGH) and 518–521 (NKMD). Residues 518–521 (NKMD) form a G4 region. The G5 stretch occupies residues 554–556 (SAH).

Belongs to the TRAFAC class translation factor GTPase superfamily. Classic translation factor GTPase family. IF-2 subfamily.

It is found in the cytoplasm. Functionally, one of the essential components for the initiation of protein synthesis. Protects formylmethionyl-tRNA from spontaneous hydrolysis and promotes its binding to the 30S ribosomal subunits. Also involved in the hydrolysis of GTP during the formation of the 70S ribosomal complex. This chain is Translation initiation factor IF-2, found in Saccharophagus degradans (strain 2-40 / ATCC 43961 / DSM 17024).